Reading from the N-terminus, the 141-residue chain is Nuclear transcription factor Y subunit B-1 (141 aa).

The interval 1-23 is disordered; that stretch reads MADTPSSPAGDGGESGGSVREQD. An N-acetylalanine modification is found at alanine 2. A DNA-binding region spans residues 26 to 32; sequence LPIANIS. The tract at residues 53–64 is subunit association domain (SAD); that stretch reads VQECVSEFISFI. The tract at residues 114–141 is disordered; the sequence is DNKGSGKSGDGSNRDAGGGVSGEEMPSW.

The protein belongs to the NFYB/HAP3 subunit family. In terms of assembly, heterotrimeric transcription factor composed of three components, NF-YA, NF-YB and NF-YC. NF-YB and NF-YC must interact and dimerize for NF-YA association and DNA binding. Binds directly with DPB3-1. Ubiquitous. Predominantly expressed in leaves, flowers and siliques.

It is found in the nucleus. Functionally, component of the NF-Y/HAP transcription factor complex. The NF-Y complex stimulates the transcription of various genes by recognizing and binding to a CCAAT motif in promoters. The chain is Nuclear transcription factor Y subunit B-1 from Arabidopsis thaliana (Mouse-ear cress).